Reading from the N-terminus, the 186-residue chain is Tetratricopeptide repeat protein 36 (186 aa).

TPR repeat units follow at residues 48–81, 83–115, and 120–153; these read SKAL…LPDR, SAYN…SGGR, and RQSF…GSPF.

It belongs to the TTC36 family.

In Mus musculus (Mouse), this protein is Tetratricopeptide repeat protein 36 (Ttc36).